We begin with the raw amino-acid sequence, 424 residues long: Histidinol dehydrogenase (424 aa).

NAD(+) contacts are provided by tyrosine 121, glutamine 183, and asparagine 206. Substrate-binding residues include serine 229, glutamine 251, and histidine 254. Glutamine 251 and histidine 254 together coordinate Zn(2+). Active-site proton acceptor residues include glutamate 319 and histidine 320. Substrate contacts are provided by histidine 320, aspartate 353, glutamate 407, and histidine 412. Zn(2+) is bound at residue aspartate 353. Position 412 (histidine 412) interacts with Zn(2+).

The protein belongs to the histidinol dehydrogenase family. It depends on Zn(2+) as a cofactor.

It carries out the reaction L-histidinol + 2 NAD(+) + H2O = L-histidine + 2 NADH + 3 H(+). It functions in the pathway amino-acid biosynthesis; L-histidine biosynthesis; L-histidine from 5-phospho-alpha-D-ribose 1-diphosphate: step 9/9. In terms of biological role, catalyzes the sequential NAD-dependent oxidations of L-histidinol to L-histidinaldehyde and then to L-histidine. In Geobacillus kaustophilus (strain HTA426), this protein is Histidinol dehydrogenase.